The primary structure comprises 101 residues: Small ribosomal subunit protein uS14 (101 aa).

The segment at 32–67 is disordered; that stretch reads SDAKRSDEEREAARLGLQKLPRNANPTRQRNRCEIT. The span at 33–44 shows a compositional bias: basic and acidic residues; that stretch reads DAKRSDEEREAA.

This sequence belongs to the universal ribosomal protein uS14 family. Part of the 30S ribosomal subunit. Contacts proteins S3 and S10.

In terms of biological role, binds 16S rRNA, required for the assembly of 30S particles and may also be responsible for determining the conformation of the 16S rRNA at the A site. The protein is Small ribosomal subunit protein uS14 of Paracidovorax citrulli (strain AAC00-1) (Acidovorax citrulli).